The primary structure comprises 377 residues: NAC domain-containing protein 76 (377 aa).

The 150-residue stretch at 10–159 folds into the NAC domain; the sequence is VPPGFRFHPT…GWVVCRAFKK (150 aa). Residues 110–165 mediate DNA binding; it reads IGMRKTLVFYKGRAPNGQKTDWIMHEYRLESDENAPPQEEGWVVCRAFKKKPMTGQ. A disordered region spans residues 312-347; the sequence is GVSGFGGHHEEDNNKIGHYNNEESNNKGSVETASST. Over residues 318–336 the composition is skewed to basic and acidic residues; that stretch reads GHHEEDNNKIGHYNNEESN. A compositionally biased stretch (polar residues) spans 337–347; that stretch reads NKGSVETASST.

The protein belongs to the plant vascular related NAC-domain protein family. Interacts with NAC030/VND7. In terms of tissue distribution, detected in root protoxylem and metaxylem poles and in vessels of protoxylems, outermost metaxylems, inner metaxylems, shoots and hypocotyls. Expressed in roots, hypocotyls, cotyledons and leaves. Present in developing xylems. Specifically expressed in vessels but not in interfascicular fibers in stems.

It is found in the nucleus. Functionally, transcription activator that binds to the secondary wall NAC binding element (SNBE), 5'-(T/A)NN(C/T)(T/C/G)TNNNNNNNA(A/C)GN(A/C/T)(A/T)-3', in the promoter of target genes. Involved in xylem formation by promoting the expression of secondary wall-associated transcription factors and of genes involved in secondary wall biosynthesis and programmed cell death, genes driven by the secondary wall NAC binding element (SNBE). Triggers thickening of secondary walls. The polypeptide is NAC domain-containing protein 76 (Arabidopsis thaliana (Mouse-ear cress)).